A 185-amino-acid polypeptide reads, in one-letter code: Ribosome-recycling factor (185 aa).

The protein belongs to the RRF family.

The protein localises to the cytoplasm. In terms of biological role, responsible for the release of ribosomes from messenger RNA at the termination of protein biosynthesis. May increase the efficiency of translation by recycling ribosomes from one round of translation to another. The chain is Ribosome-recycling factor from Finegoldia magna (strain ATCC 29328 / DSM 20472 / WAL 2508) (Peptostreptococcus magnus).